We begin with the raw amino-acid sequence, 290 residues long: Probable proteasome subunit beta type-6 (290 aa).

Belongs to the peptidase T1B family. As to quaternary structure, the 26S proteasome consists of a 20S proteasome core and two 19S regulatory subunits. The 20S proteasome core is composed of 28 subunits that are arranged in four stacked rings, resulting in a barrel-shaped structure. The two end rings are each formed by seven alpha subunits, and the two central rings are each formed by seven beta subunits. The catalytic chamber with the active sites is on the inside of the barrel.

Its subcellular location is the cytoplasm. The protein resides in the nucleus. Non-catalytic component of the proteasome which degrades poly-ubiquitinated proteins in the cytoplasm and in the nucleus. It is essential for the regulated turnover of proteins and for the removal of misfolded proteins. The proteasome is a multicatalytic proteinase complex that is characterized by its ability to cleave peptides with Arg, Phe, Tyr, Leu, and Glu adjacent to the leaving group at neutral or slightly basic pH. It has an ATP-dependent proteolytic activity. This is Probable proteasome subunit beta type-6 (PRE7) from Encephalitozoon cuniculi (strain GB-M1) (Microsporidian parasite).